Consider the following 122-residue polypeptide: Phospholipase A2 crotoxin basic chain (122 aa).

Disulfide bonds link cysteine 26–cysteine 115, cysteine 28–cysteine 44, cysteine 43–cysteine 95, cysteine 49–cysteine 122, cysteine 50–cysteine 88, cysteine 57–cysteine 81, and cysteine 75–cysteine 86. Residues tyrosine 27, glycine 29, and glycine 31 each contribute to the Ca(2+) site. Histidine 47 is an active-site residue. Aspartate 48 provides a ligand contact to Ca(2+). The active site involves aspartate 89.

As to quaternary structure, heterodimer of one acidic (CA also named crotapotin) and one basic (CB) subunits; non-covalently linked. Requires Ca(2+) as cofactor. In terms of tissue distribution, expressed by the venom gland.

The protein localises to the secreted. It carries out the reaction a 1,2-diacyl-sn-glycero-3-phosphocholine + H2O = a 1-acyl-sn-glycero-3-phosphocholine + a fatty acid + H(+). Heterodimer CA-CB: Crotoxin is a potent presynaptic neurotoxin that possesses phospholipase A2 (PLA2) activity and exerts a lethal action by blocking neuromuscular transmission. It consists of a non-covalent association of a basic and weakly toxic PLA2 subunit (CB), with a small acidic, non-enzymatic and non-toxic subunit (CA also named crotapotin). The complex acts by binding to a specific 48-kDa protein (R48) receptor located on presynaptic membranes, forming a transient ternary complex CA-CB-R48, followed by dissociation of the CA-CB complex and release of the CA subunit. At equilibrium, only the CB subunits remain associated with the specific crotoxin receptor. In addition to neurotoxicity, crotoxin has been found to exert nephrotoxicity, and cardiovascular toxicity. Moreover, anti-inflammatory, immunomodulatory, anti-tumor and analgesic effects of crotoxin have also been reported. Its function is as follows. Monomer CB: The basic subunit of crotoxin is a snake venom phospholipase A2 (PLA2) that exhibits weak neurotoxicity and strong anticoagulant effects by binding to factor Xa (F10) and inhibiting the prothrombinase activity. In addition, it exerts myotoxicity, nephrotoxicity, and cardiovascular toxicity as well as anti-inflammatory, immunomodulatory, anti-tumor and analgesic effects. Also shows a strong antimicrobial activity against X.axonopodis passiforae (Gram-negative) which is completely dependent on the enzymatic activity. PLA2 catalyzes the calcium-dependent hydrolysis of the 2- acyl groups in 3-sn-phosphoglycerides. The sequence is that of Phospholipase A2 crotoxin basic chain from Crotalus durissus collilineatus (Brazilian rattlesnake).